A 61-amino-acid chain; its full sequence is Weak toxin CM-2a (61 aa).

Cystine bridges form between Cys3/Cys19, Cys12/Cys37, Cys41/Cys49, and Cys50/Cys55.

Belongs to the three-finger toxin family. Short-chain subfamily. Orphan group XX sub-subfamily. In terms of tissue distribution, expressed by the venom gland.

Its subcellular location is the secreted. The polypeptide is Weak toxin CM-2a (Naja annulifera (Banded Egyptian cobra)).